Reading from the N-terminus, the 368-residue chain is Isopentenyl-diphosphate delta-isomerase (368 aa).

Residue 7-8 (RK) participates in substrate binding. Residues Thr-65, 66–68 (GMT), Ser-96, and Asn-125 contribute to the FMN site. 96 to 98 (SQR) is a substrate binding site. Gln-160 contacts substrate. Glu-161 provides a ligand contact to Mg(2+). FMN-binding positions include Lys-193, Ser-218, Thr-223, 275-277 (GIR), and 296-297 (AL).

It belongs to the IPP isomerase type 2 family. In terms of assembly, homooctamer. Dimer of tetramers. FMN serves as cofactor. Requires NADPH as cofactor. The cofactor is Mg(2+).

The protein localises to the cytoplasm. It carries out the reaction isopentenyl diphosphate = dimethylallyl diphosphate. Involved in the biosynthesis of isoprenoids. Catalyzes the 1,3-allylic rearrangement of the homoallylic substrate isopentenyl (IPP) to its allylic isomer, dimethylallyl diphosphate (DMAPP). This Saccharolobus islandicus (strain L.S.2.15 / Lassen #1) (Sulfolobus islandicus) protein is Isopentenyl-diphosphate delta-isomerase.